Reading from the N-terminus, the 337-residue chain is Aspartate-semialdehyde dehydrogenase 2 (337 aa).

NADP(+)-binding positions include 13-16 (TGAV) and 41-42 (RS). Arg101 lines the phosphate pocket. Cys132 acts as the Acyl-thioester intermediate in catalysis. Gln159 is a binding site for substrate. 162–163 (SG) serves as a coordination point for NADP(+). Lys216 is a binding site for phosphate. Arg238 serves as a coordination point for substrate. His245 functions as the Proton acceptor in the catalytic mechanism. Residue Asn316 coordinates NADP(+).

Belongs to the aspartate-semialdehyde dehydrogenase family. As to quaternary structure, homodimer.

The enzyme catalyses L-aspartate 4-semialdehyde + phosphate + NADP(+) = 4-phospho-L-aspartate + NADPH + H(+). It participates in amino-acid biosynthesis; L-lysine biosynthesis via DAP pathway; (S)-tetrahydrodipicolinate from L-aspartate: step 2/4. It functions in the pathway amino-acid biosynthesis; L-methionine biosynthesis via de novo pathway; L-homoserine from L-aspartate: step 2/3. The protein operates within amino-acid biosynthesis; L-threonine biosynthesis; L-threonine from L-aspartate: step 2/5. In terms of biological role, catalyzes the NADPH-dependent formation of L-aspartate-semialdehyde (L-ASA) by the reductive dephosphorylation of L-aspartyl-4-phosphate. This is Aspartate-semialdehyde dehydrogenase 2 (asd2) from Vibrio cholerae serotype O1 (strain ATCC 39315 / El Tor Inaba N16961).